Consider the following 149-residue polypeptide: Large ribosomal subunit protein bL9 (149 aa).

Belongs to the bacterial ribosomal protein bL9 family.

In terms of biological role, binds to the 23S rRNA. This is Large ribosomal subunit protein bL9 from Legionella pneumophila subsp. pneumophila (strain Philadelphia 1 / ATCC 33152 / DSM 7513).